We begin with the raw amino-acid sequence, 184 residues long: Bifunctional protein PyrR (184 aa).

The PRPP-binding motif lies at 105–117 (VVMVDDVLFTGRT).

Belongs to the purine/pyrimidine phosphoribosyltransferase family. PyrR subfamily.

It carries out the reaction UMP + diphosphate = 5-phospho-alpha-D-ribose 1-diphosphate + uracil. Its function is as follows. Regulates the transcription of the pyrimidine nucleotide (pyr) operon in response to exogenous pyrimidines. In terms of biological role, also displays a weak uracil phosphoribosyltransferase activity which is not physiologically significant. The protein is Bifunctional protein PyrR of Rubrobacter xylanophilus (strain DSM 9941 / JCM 11954 / NBRC 16129 / PRD-1).